The following is a 313-amino-acid chain: MAAPREPEVIRDKAAMRAWSRRRRAEGKTVAVVPTMGYLHQGHLSLISAAAAAASADPVAIVVTIYVNPSQFAPSEDLATYPSDFAGDLRKLASTGVVDAVFNPPDLYVRGAGRRGAASGGAISCLEEAAGDGHETWVRVERLEKGMCGASRPVFFRGVATIVSKLFNIIEPDVAVFGKKDYQQWRVICRMVRDLDFAIEIIGSEIVREADGLAMSSRNVHLSREEREKALSISRSLVDARTGALKGNTDCKQIKNKIVQTLTETGGQVDYVEIVEQESLVPVEQIDGPVVICVAAWFGKVRLIDNIEIDTRS.

36 to 43 serves as a coordination point for ATP; the sequence is MGYLHQGH. The active-site Proton donor is the His-43. (R)-pantoate is bound at residue Gln-71. Residue Gln-71 participates in beta-alanine binding. 178–181 serves as a coordination point for ATP; the sequence is GKKD. A (R)-pantoate-binding site is contributed by Gln-184. Position 215–218 (215–218) interacts with ATP; that stretch reads MSSR.

The protein belongs to the pantothenate synthetase family. As to quaternary structure, homodimer.

Its subcellular location is the cytoplasm. The protein localises to the cytosol. The catalysed reaction is (R)-pantoate + beta-alanine + ATP = (R)-pantothenate + AMP + diphosphate + H(+). The protein operates within cofactor biosynthesis; (R)-pantothenate biosynthesis; (R)-pantothenate from (R)-pantoate and beta-alanine: step 1/1. Its function is as follows. Catalyzes the condensation of pantoate with beta-alanine to form pantothenate. Essential for panthotenate biosynthesis. The protein is Pantoate--beta-alanine ligase (PANC) of Oryza sativa subsp. japonica (Rice).